The sequence spans 446 residues: Histidine--tRNA ligase (446 aa).

Belongs to the class-II aminoacyl-tRNA synthetase family. In terms of assembly, homodimer.

It localises to the cytoplasm. The catalysed reaction is tRNA(His) + L-histidine + ATP = L-histidyl-tRNA(His) + AMP + diphosphate + H(+). The chain is Histidine--tRNA ligase from Burkholderia cenocepacia (strain HI2424).